The sequence spans 460 residues: Malonyl-coenzyme A:anthocyanin 3-O-glucoside-6''-O-malonyltransferase (460 aa).

Catalysis depends on proton acceptor residues histidine 173 and aspartate 400.

This sequence belongs to the plant acyltransferase family.

The enzyme catalyses an anthocyanidin 3-O-beta-D-glucoside + malonyl-CoA = an anthocyanidin 3-O-(6-O-malonyl-beta-D-glucoside) + CoA. Its activity is regulated as follows. Completely inhibited by 5 mM N-ethylmaleimide or 0.1 mM Cu(2+). Partially inhibited by 0.1 mM Fe(2+) or 0.1 mM Hg(2+). In terms of biological role, catalyzes the transfer of the malonyl group from malonyl-CoA to pelargonidin 3-O-glucoside to produce pelargonidin 3-O-6''-O-malonylglucoside. Can also transfer the malonyl group from malonyl-CoA to cyanidin 3-O-glucoside, delphinidin 3-O-glucoside and quercetin 3-O-glucoside. This Dahlia pinnata (Pinnate dahlia) protein is Malonyl-coenzyme A:anthocyanin 3-O-glucoside-6''-O-malonyltransferase.